A 59-amino-acid chain; its full sequence is Large ribosomal subunit protein uL30 (59 aa).

This sequence belongs to the universal ribosomal protein uL30 family. Part of the 50S ribosomal subunit.

This chain is Large ribosomal subunit protein uL30, found in Clostridium botulinum (strain ATCC 19397 / Type A).